A 104-amino-acid chain; its full sequence is Pole-localizer protein TmaR (104 aa).

2 coiled-coil regions span residues 13-43 (RKNK…NLLD) and 76-96 (SAEI…LTEE).

This sequence belongs to the pole-localizer TmaR family.

The protein resides in the cytoplasm. In terms of biological role, pole-localizer protein involved in the regulation of several cellular processes. The protein is Pole-localizer protein TmaR of Vibrio vulnificus (strain CMCP6).